Consider the following 340-residue polypeptide: Anthranilate phosphoribosyltransferase (340 aa).

5-phospho-alpha-D-ribose 1-diphosphate contacts are provided by residues Gly83, 86 to 87, Thr91, 93 to 96, 111 to 119, and Ser123; these read GD, NVST, and KHGNRSVSS. Gly83 provides a ligand contact to anthranilate. Residue Ser95 coordinates Mg(2+). Asn114 contributes to the anthranilate binding site. Arg169 is a binding site for anthranilate. Residues Asp228 and Glu229 each coordinate Mg(2+).

Belongs to the anthranilate phosphoribosyltransferase family. As to quaternary structure, homodimer. It depends on Mg(2+) as a cofactor.

The enzyme catalyses N-(5-phospho-beta-D-ribosyl)anthranilate + diphosphate = 5-phospho-alpha-D-ribose 1-diphosphate + anthranilate. It participates in amino-acid biosynthesis; L-tryptophan biosynthesis; L-tryptophan from chorismate: step 2/5. In terms of biological role, catalyzes the transfer of the phosphoribosyl group of 5-phosphorylribose-1-pyrophosphate (PRPP) to anthranilate to yield N-(5'-phosphoribosyl)-anthranilate (PRA). The protein is Anthranilate phosphoribosyltransferase of Aquifex aeolicus (strain VF5).